Consider the following 121-residue polypeptide: Small ribosomal subunit protein eS24 (121 aa).

The protein belongs to the eukaryotic ribosomal protein eS24 family.

The polypeptide is Small ribosomal subunit protein eS24 (Pyrobaculum arsenaticum (strain DSM 13514 / JCM 11321 / PZ6)).